The following is a 334-amino-acid chain: L-lactate dehydrogenase B chain (334 aa).

A2 carries the post-translational modification N-acetylalanine. K7 bears the N6-acetyllysine mark. S44 is modified (phosphoserine). NAD(+) is bound by residues 53–58 and R100; that span reads DVLEDK. At K58 the chain carries N6-acetyllysine. R107 provides a ligand contact to substrate. K119 is modified (N6-acetyllysine). NAD(+) is bound at residue N139. The substrate site is built by N139 and R170. Residue H194 is the Proton acceptor of the active site. Residue Y240 is modified to Phosphotyrosine. T249 lines the substrate pocket. K329 is subject to N6-acetyllysine.

The protein belongs to the LDH/MDH superfamily. LDH family. Homotetramer. Interacts with PTEN upstream reading frame protein MP31; the interaction leads to inhibition of mitochondrial lactate dehydrogenase activity, preventing conversion of lactate to pyruvate in mitochondria.

Its subcellular location is the cytoplasm. It is found in the mitochondrion inner membrane. The catalysed reaction is (S)-lactate + NAD(+) = pyruvate + NADH + H(+). It participates in fermentation; pyruvate fermentation to lactate; (S)-lactate from pyruvate: step 1/1. Interconverts simultaneously and stereospecifically pyruvate and lactate with concomitant interconversion of NADH and NAD(+). The sequence is that of L-lactate dehydrogenase B chain (LDHB) from Monodelphis domestica (Gray short-tailed opossum).